The chain runs to 1147 residues: Nucleolar protein 8 (1147 aa).

Residues 8–89 (KRLFVGGLGQ…GTLQIQLAKE (82 aa)) enclose the RRM domain. Residue Lys-225 forms a Glycyl lysine isopeptide (Lys-Gly) (interchain with G-Cter in SUMO2) linkage. Ser-300 and Ser-306 each carry phosphoserine. Residue Lys-316 forms a Glycyl lysine isopeptide (Lys-Gly) (interchain with G-Cter in SUMO2) linkage. Tyr-362 is subject to Phosphotyrosine. Residues Ser-364 and Ser-365 each carry the phosphoserine modification. At Thr-367 the chain carries Phosphothreonine. A disordered region spans residues 379–401 (KVKNSAESSQPERTVSKKSSFQK). Residues 383-400 (SAESSQPERTVSKKSSFQ) are compositionally biased toward polar residues. Residue Ser-416 is modified to Phosphoserine. 7 disordered regions span residues 427–452 (KFVN…EEYK), 472–511 (AGSH…DLYN), 592–659 (MENG…PLKA), 686–741 (KALE…EDNQ), 766–888 (ANLD…NEDE), 932–963 (KHDH…AEKL), and 986–1017 (SNTD…TLAC). Positions 441 to 450 (DSEESEEDEE) are enriched in acidic residues. Composition is skewed to polar residues over residues 592–610 (MENG…TSCQ) and 629–650 (TFEN…STNP). Basic and acidic residues-rich tracts occupy residues 700–714 (SLEK…EDPQ) and 732–741 (AKDKQAEDNQ). A Phosphoserine modification is found at Ser-704. Position 777 is a phosphothreonine (Thr-777). Phosphoserine is present on residues Ser-783 and Ser-787. The span at 799 to 809 (CPEKELMKESV) shows a compositional bias: basic and acidic residues. Ser-819, Ser-820, Ser-825, Ser-827, and Ser-872 each carry phosphoserine. Residues 857–883 (SDERFRMDSRFLESDSEDEKKELNEDK) are compositionally biased toward basic and acidic residues. 2 coiled-coil regions span residues 868-898 (LESD…KTLN) and 937-963 (IYER…AEKL). Positions 994–1011 (DVPRTEAGAREGTGKIRN) are enriched in basic and acidic residues. Lys-1038 participates in a covalent cross-link: Glycyl lysine isopeptide (Lys-Gly) (interchain with G-Cter in SUMO2). Positions 1055 to 1086 (PNDPRFQDSSSEEEDIAEEADHSKPSPGEAVP) are disordered. Residues Ser-1063, Ser-1064, Ser-1065, and Ser-1080 each carry the phosphoserine modification.

As to quaternary structure, interacts with the GTP form of RRAGA, RRAGC and RRAGD. Interacts with NIP7. Interacts with DDX18; the interaction is RNA-dependent. Interacts with DDX47; the interaction is RNA-dependent. In terms of processing, phosphorylated.

It localises to the nucleus. Its subcellular location is the nucleolus. In terms of biological role, plays an essential role in the survival of diffuse-type gastric cancer cells. Acts as a nucleolar anchoring protein for DDX47. May be involved in regulation of gene expression at the post-transcriptional level or in ribosome biogenesis in cancer cells. The chain is Nucleolar protein 8 from Mus musculus (Mouse).